The following is a 497-amino-acid chain: Serine hydroxymethyltransferase (497 aa).

(6S)-5,6,7,8-tetrahydrofolate-binding positions include leucine 176 and 180-182; that span reads GHL. At lysine 289 the chain carries N6-(pyridoxal phosphate)lysine.

The protein belongs to the SHMT family. As to quaternary structure, homodimer. The cofactor is pyridoxal 5'-phosphate.

It localises to the cytoplasm. The enzyme catalyses (6R)-5,10-methylene-5,6,7,8-tetrahydrofolate + glycine + H2O = (6S)-5,6,7,8-tetrahydrofolate + L-serine. Its pathway is one-carbon metabolism; tetrahydrofolate interconversion. It participates in amino-acid biosynthesis; glycine biosynthesis; glycine from L-serine: step 1/1. Catalyzes the reversible interconversion of serine and glycine with tetrahydrofolate (THF) serving as the one-carbon carrier. This reaction serves as the major source of one-carbon groups required for the biosynthesis of purines, thymidylate, methionine, and other important biomolecules. Also exhibits THF-independent aldolase activity toward beta-hydroxyamino acids, producing glycine and aldehydes, via a retro-aldol mechanism. The polypeptide is Serine hydroxymethyltransferase (Chlamydia felis (strain Fe/C-56) (Chlamydophila felis)).